The sequence spans 215 residues: Small ribosomal subunit protein uS2 (215 aa).

This sequence belongs to the universal ribosomal protein uS2 family.

The polypeptide is Small ribosomal subunit protein uS2 (Caldivirga maquilingensis (strain ATCC 700844 / DSM 13496 / JCM 10307 / IC-167)).